The primary structure comprises 341 residues: tRNA N6-adenosine threonylcarbamoyltransferase (341 aa).

The Fe cation site is built by His-111 and His-115. Substrate-binding positions include 134–138 (LVSGG), Asp-167, Gly-180, and Asn-276. Asp-304 provides a ligand contact to Fe cation.

This sequence belongs to the KAE1 / TsaD family. Fe(2+) is required as a cofactor.

It is found in the cytoplasm. The catalysed reaction is L-threonylcarbamoyladenylate + adenosine(37) in tRNA = N(6)-L-threonylcarbamoyladenosine(37) in tRNA + AMP + H(+). Functionally, required for the formation of a threonylcarbamoyl group on adenosine at position 37 (t(6)A37) in tRNAs that read codons beginning with adenine. Is involved in the transfer of the threonylcarbamoyl moiety of threonylcarbamoyl-AMP (TC-AMP) to the N6 group of A37, together with TsaE and TsaB. TsaD likely plays a direct catalytic role in this reaction. This chain is tRNA N6-adenosine threonylcarbamoyltransferase, found in Azotobacter vinelandii (strain DJ / ATCC BAA-1303).